Consider the following 1401-residue polypeptide: Alpha-latrotoxin-Lt1a (1401 aa).

Residues 1 to 20 form the signal peptide; that stretch reads MISVGEIMERANHSLVRMRR. Positions 17–20 are furin-like endopeptidase recognition region; that stretch reads RMRR. Residues 238–257 form a helix H8 is the probable transmembrane region of the tetrameric pore inserted in the target cell membrane region; it reads VLYALLYGTQTYVSVMFFLL. C413 and C1066 are oxidised to a cystine. 22 ANK repeats span residues 458 to 489, 490 to 521, 525 to 554, 559 to 589, 593 to 622, 626 to 656, 660 to 690, 695 to 723, 729 to 758, 762 to 791, 795 to 824, 828 to 857, 862 to 891, 895 to 924, 928 to 957, 971 to 1003, 1004 to 1033, 1035 to 1064, 1068 to 1097, 1101 to 1131, 1137 to 1166, and 1170 to 1199; these read LYNAASNPDSAVGFKEFTKLNYDGANIRATFD, HGRTVFHAAAKSGNDKIMFGLTFLAKSTELNQ, KGYTPIHVAADSGNAGIVNLLIQRGVSINS, FLQTPLHLAAQRGFVTTFQRLMESPEININE, DGFTPLHYAIRGGERILEAFLNQISIDVNA, TGLTPFHLAIIKNDWPVASTLLGSKKVDINA, NNITALHYAAILGYLETTKQLINLKEINANV, GLLSALHYAILYKHDDVASFLMRSSNVNV, GGITPLHLAVIQGRKQILSLMFDIGVNIEQ, EKYTPLHLAAMSKYPELIQILLDQGSNFEA, SGATPLHLATFKGKSQAALILLNNEVNWRD, NGQMPIHGAAMTGLLDVAQAIISIDATVVD, NSDTPLNLAAQNSHIDVIKYFIDQGADINT, KGLAPLLAFSKKGNLDMVKYLFDKNANVYI, DGMNFFYYAVQNGHLNIVKYAMSEKDKFEW, EECAISHFAVCDAVQFDRIEIVKYFVGTLGNFA, ICGPLHQAARYGHLDIVKYLVEEEFLSVDG, KTDTPLCYASENGHFTVVQYLVSNGAKVNH, NGMTAIDKAITKNHLQVVQFLAANGVDFRR, RGTTPFLTAVAENALHIAEYLIREKRQDINI, DKDTALHLAVYYKNLQMIKLLIKYGIDVTI, and YDKTALDIAIDAKFSNIVEYLKTKSGKFRR. A 4C4.1 epitope region spans residues 1026-1032; it reads EEFLSVD. Residues 1196–1199 form a furin-like endopeptidase recognition region region; the sequence is KFRR. Residues 1200 to 1401 constitute a propeptide that is removed on maturation; the sequence is EYKSSYGERS…SDGILTKKLM (202 aa).

Belongs to the cationic peptide 01 (latrotoxin) family. 03 (alpha-latrotoxin) subfamily. Homotetramer in membranes. In terms of processing, processed by furin-like proteases at both the N- and C-termini. As to expression, expressed in venom gland, cephalothorax, and abdomen tissues from both males and females.

The protein localises to the secreted. The protein resides in the target cell membrane. Functionally, presynaptic neurotoxin that causes massive release of neurotransmitters from vertebrate (but not invertebrate) nerve terminals and endocrine cells via a complex mechanism involving activation of receptor(s) and toxin insertion into the plasma membrane with subsequent pore formation. Binds to neurexin-1-alpha (NRXN1) in a calcium dependent manner, adhesion G protein-coupled receptor L1 (ADGRL1, also termed latrophilin-1 and calcium-independent receptor of latrotoxin (CIRL)), and receptor-type tyrosine-protein phosphatase S (PTPRS), also termed PTP sigma. NRXN1 and PTPRS are suggested to provide a platform for binding and subsequent pore formation events. In contrast, binding to ADGRL1 does not involve oligomerization and channel formation, but direct downstream stimulation of the synaptic fusion machinery. The polypeptide is Alpha-latrotoxin-Lt1a (Latrodectus tredecimguttatus (Mediterranean black widow spider)).